The primary structure comprises 220 residues: Thiamine-phosphate synthase (220 aa).

4-amino-2-methyl-5-(diphosphooxymethyl)pyrimidine-binding positions include 39–43 (QLRDK) and Asn80. Mg(2+) is bound by residues Asp81 and Asp100. Residue Ser119 coordinates 4-amino-2-methyl-5-(diphosphooxymethyl)pyrimidine. 145-147 (TPT) lines the 2-[(2R,5Z)-2-carboxy-4-methylthiazol-5(2H)-ylidene]ethyl phosphate pocket. Lys148 contributes to the 4-amino-2-methyl-5-(diphosphooxymethyl)pyrimidine binding site. 2-[(2R,5Z)-2-carboxy-4-methylthiazol-5(2H)-ylidene]ethyl phosphate is bound at residue Gly176.

The protein belongs to the thiamine-phosphate synthase family. It depends on Mg(2+) as a cofactor.

The enzyme catalyses 2-[(2R,5Z)-2-carboxy-4-methylthiazol-5(2H)-ylidene]ethyl phosphate + 4-amino-2-methyl-5-(diphosphooxymethyl)pyrimidine + 2 H(+) = thiamine phosphate + CO2 + diphosphate. The catalysed reaction is 2-(2-carboxy-4-methylthiazol-5-yl)ethyl phosphate + 4-amino-2-methyl-5-(diphosphooxymethyl)pyrimidine + 2 H(+) = thiamine phosphate + CO2 + diphosphate. It carries out the reaction 4-methyl-5-(2-phosphooxyethyl)-thiazole + 4-amino-2-methyl-5-(diphosphooxymethyl)pyrimidine + H(+) = thiamine phosphate + diphosphate. Its pathway is cofactor biosynthesis; thiamine diphosphate biosynthesis; thiamine phosphate from 4-amino-2-methyl-5-diphosphomethylpyrimidine and 4-methyl-5-(2-phosphoethyl)-thiazole: step 1/1. Functionally, condenses 4-methyl-5-(beta-hydroxyethyl)thiazole monophosphate (THZ-P) and 2-methyl-4-amino-5-hydroxymethyl pyrimidine pyrophosphate (HMP-PP) to form thiamine monophosphate (TMP). This Mycobacterium ulcerans (strain Agy99) protein is Thiamine-phosphate synthase.